Here is a 327-residue protein sequence, read N- to C-terminus: Short chain isoprenyl diphosphate synthase (327 aa).

3 residues coordinate isopentenyl diphosphate: Lys48, Arg51, and His80. The Mg(2+) site is built by Asp87 and Asp91. Arg96 is an an all-trans-polyprenyl diphosphate binding site. Residue Arg97 participates in isopentenyl diphosphate binding. Residues Lys176, Thr177, Gln214, Lys231, and Lys241 each coordinate an all-trans-polyprenyl diphosphate.

It belongs to the FPP/GGPP synthase family. In terms of assembly, homodimer. Requires Mg(2+) as cofactor.

Its subcellular location is the cytoplasm. In Methanocaldococcus jannaschii (strain ATCC 43067 / DSM 2661 / JAL-1 / JCM 10045 / NBRC 100440) (Methanococcus jannaschii), this protein is Short chain isoprenyl diphosphate synthase (idsA).